Consider the following 913-residue polypeptide: Epithelial discoidin domain-containing receptor 1 (913 aa).

The first 18 residues, 1–18, serve as a signal peptide directing secretion; that stretch reads MGPEALSSLLLLLLVASG. Residues 21 to 417 are Extracellular-facing; sequence DMKGHFDPAK…VAKAEGSPTA (397 aa). Residues 31–185 enclose the F5/8 type C domain; that stretch reads CRYALGMQDR…VCLRVELYGC (155 aa). 2 cysteine pairs are disulfide-bonded: C31–C185 and C74–C177. Residues 192–367 form a DS-like domain region; it reads LSYTAPVGQT…LFSEISFISD (176 aa). Ca(2+)-binding residues include N211, Q230, D233, V235, Y253, and Y255. A glycan (N-linked (GlcNAc...) asparagine) is linked at N211. N260 is a glycosylation site (N-linked (GlcNAc...) asparagine). C303 and C348 are joined by a disulfide. Ca(2+) is bound by residues S360 and E361. N-linked (GlcNAc...) asparagine glycosylation is found at N370 and N394. The chain crosses the membrane as a helical span at residues 418–438; sequence ILIGCLVAIILLLLLIIALML. Over 439–913 the chain is Cytoplasmic; the sequence is WRLHWRRLLS…FLAEDALNTV (475 aa). Residues 470-499 are disordered; it reads ILINNRPGPREPPPYQEPRPRGNPPHSAPC. Over residues 479-496 the composition is skewed to pro residues; it reads REPPPYQEPRPRGNPPHS. The PPxY motif signature appears at 481–484; it reads PPPY. Phosphotyrosine; by autocatalysis occurs at positions 484, 513, and 520. The Protein kinase domain maps to 610–905; that stretch reads LRFKEKLGEG…PPFSQLHRFL (296 aa). 616 to 624 is a binding site for ATP; the sequence is LGEGQFGEV. S631 is modified (phosphoserine). K655 contacts ATP. Y740 is subject to Phosphotyrosine; by autocatalysis. The Proton acceptor role is filled by D766. A phosphotyrosine; by autocatalysis mark is found at Y792, Y796, and Y797.

The protein belongs to the protein kinase superfamily. Tyr protein kinase family. Insulin receptor subfamily. As to quaternary structure, homodimer. Interacts (via PPxY motif) with WWC1 (via WW domains) in a collagen-regulated manner. Forms a tripartite complex with WWC1 and PRKCZ, but predominantly in the absence of collagen. Interacts (tyrosine phosphorylated) with SHC1. Interacts with SRC. Interacts with MYH9. Interacts with CDH1. Interacts with PTPN11. Interacts with NCK2. In terms of processing, autophosphorylated in response to fibrillar collagen binding. Post-translationally, glycosylation of Asn-211, but apparently not of Asn-260 or Asn-394, prevents autophosphorylation from occurring in the absence of collagen. Detected in T-47D, MDA-MB-175 and HBL-100 breast carcinoma cells, A-431 epidermoid carcinoma cells, SW48 and SNU-C2B colon carcinoma cells and Hs 294T melanoma cells (at protein level). Expressed at low levels in most adult tissues and is highest in the brain, lung, placenta and kidney. Lower levels of expression are detected in melanocytes, heart, liver, skeletal muscle and pancreas. Abundant in breast carcinoma cell lines. In the colonic mucosa, expressed in epithelia but not in the connective tissue of the lamina propria. In the thyroid gland, expressed in the epithelium of the thyroid follicles. In pancreas, expressed in the islets of Langerhans cells, but not in the surrounding epithelial cells of the exocrine pancreas. In kidney, expressed in the epithelia of the distal tubules. Not expressed in connective tissue, endothelial cells, adipose tissue, muscle cells or cells of hematopoietic origin.

It is found in the cell membrane. The protein resides in the secreted. The catalysed reaction is L-tyrosyl-[protein] + ATP = O-phospho-L-tyrosyl-[protein] + ADP + H(+). Inhibited by the multi-targeted cancer drugs imatinib and ponatinib. In terms of biological role, tyrosine kinase that functions as a cell surface receptor for fibrillar collagen and regulates cell attachment to the extracellular matrix, remodeling of the extracellular matrix, cell migration, differentiation, survival and cell proliferation. Collagen binding triggers a signaling pathway that involves SRC and leads to the activation of MAP kinases. Regulates remodeling of the extracellular matrix by up-regulation of the matrix metalloproteinases MMP2, MMP7 and MMP9, and thereby facilitates cell migration and wound healing. Required for normal blastocyst implantation during pregnancy, for normal mammary gland differentiation and normal lactation. Required for normal ear morphology and normal hearing. Promotes smooth muscle cell migration, and thereby contributes to arterial wound healing. Also plays a role in tumor cell invasion. Phosphorylates PTPN11. In Homo sapiens (Human), this protein is Epithelial discoidin domain-containing receptor 1 (DDR1).